Consider the following 199-residue polypeptide: Chaperone protein TorD (199 aa).

It belongs to the TorD/DmsD family. TorD subfamily.

It is found in the cytoplasm. Functionally, involved in the biogenesis of TorA. Acts on TorA before the insertion of the molybdenum cofactor and, as a result, probably favors a conformation of the apoenzyme that is competent for acquiring the cofactor. The polypeptide is Chaperone protein TorD (Escherichia coli O8 (strain IAI1)).